A 160-amino-acid polypeptide reads, in one-letter code: Nucleotide-binding protein VF_1240 (160 aa).

The protein belongs to the YajQ family.

Nucleotide-binding protein. This chain is Nucleotide-binding protein VF_1240, found in Aliivibrio fischeri (strain ATCC 700601 / ES114) (Vibrio fischeri).